The sequence spans 418 residues: Light-independent protochlorophyllide reductase subunit N (418 aa).

Positions 17, 42, and 103 each coordinate [4Fe-4S] cluster.

Belongs to the BchN/ChlN family. As to quaternary structure, protochlorophyllide reductase is composed of three subunits; ChlL, ChlN and ChlB. Forms a heterotetramer of two ChlB and two ChlN subunits. The cofactor is [4Fe-4S] cluster.

It catalyses the reaction chlorophyllide a + oxidized 2[4Fe-4S]-[ferredoxin] + 2 ADP + 2 phosphate = protochlorophyllide a + reduced 2[4Fe-4S]-[ferredoxin] + 2 ATP + 2 H2O. Its pathway is porphyrin-containing compound metabolism; chlorophyll biosynthesis (light-independent). In terms of biological role, component of the dark-operative protochlorophyllide reductase (DPOR) that uses Mg-ATP and reduced ferredoxin to reduce ring D of protochlorophyllide (Pchlide) to form chlorophyllide a (Chlide). This reaction is light-independent. The NB-protein (ChlN-ChlB) is the catalytic component of the complex. In Prochlorococcus marinus subsp. pastoris (strain CCMP1986 / NIES-2087 / MED4), this protein is Light-independent protochlorophyllide reductase subunit N.